The primary structure comprises 230 residues: Small ribosomal subunit protein uS7m (230 aa).

Belongs to the universal ribosomal protein uS7 family. Part of the small ribosomal subunit.

The protein resides in the mitochondrion. One of the primary rRNA binding proteins, it binds directly to 18S rRNA where it nucleates assembly of the head domain of the small subunit. This Marchantia polymorpha (Common liverwort) protein is Small ribosomal subunit protein uS7m (RPS7).